Reading from the N-terminus, the 323-residue chain is NADH-ubiquinone oxidoreductase chain 1 (323 aa).

Helical transmembrane passes span 8 to 28, 74 to 94, 105 to 125, 145 to 165, 176 to 196, 236 to 256, 258 to 278, and 298 to 318; these read VINP…LTLL, FLFL…WAPM, LGVL…LGSG, ISYE…TGGF, SIWL…STLA, ILLM…IPAF, ELTA…FLWV, and FLPL…ALAG.

This sequence belongs to the complex I subunit 1 family.

It is found in the mitochondrion inner membrane. It catalyses the reaction a ubiquinone + NADH + 5 H(+)(in) = a ubiquinol + NAD(+) + 4 H(+)(out). Functionally, core subunit of the mitochondrial membrane respiratory chain NADH dehydrogenase (Complex I) that is believed to belong to the minimal assembly required for catalysis. Complex I functions in the transfer of electrons from NADH to the respiratory chain. The immediate electron acceptor for the enzyme is believed to be ubiquinone. This is NADH-ubiquinone oxidoreductase chain 1 (MT-ND1) from Oncorhynchus mykiss (Rainbow trout).